The following is a 302-amino-acid chain: Fluoroacetate dehalogenase (302 aa).

One can recognise an AB hydrolase-1 domain in the interval 32 to 270; it reads PPLLLLHGFP…LDVWRKWASD (239 aa). The active-site Nucleophile is the Asp-110. Fluoroacetate-binding residues include Arg-111, Arg-114, His-155, Trp-156, and Tyr-219. Catalysis depends on His-280, which acts as the Proton acceptor.

This sequence belongs to the AB hydrolase superfamily. Epoxide hydrolase family. In terms of assembly, homodimer.

The catalysed reaction is a haloacetate + H2O = a halide anion + glycolate + H(+). It carries out the reaction fluoroacetate + H2O = fluoride + glycolate + H(+). The enzyme catalyses chloroacetate + H2O = glycolate + chloride + H(+). Functionally, catalyzes the hydrolytic defluorination of fluoroacetate to produce glycolate. Has lower activity towards chloroacetate and bromoacetate. This chain is Fluoroacetate dehalogenase, found in Rhodopseudomonas palustris (strain ATCC BAA-98 / CGA009).